A 494-amino-acid chain; its full sequence is Myocyte-specific enhancer factor 2A (494 aa).

Residues 3 to 57 (RKKIQITRIMDERNRQVTFTKRKFGLMKKAYELSVLCDCEIALIIFNSSNKLFQY) form the MADS-box domain. The segment at residues 58 to 86 (ASTDMDKVLLKYTEYNEPHESRTNSDIVE) is a DNA-binding region (mef2-type). At Ser59 the chain carries Phosphoserine; by CK2. A phosphoserine mark is found at Ser98 and Ser108. Positions 171-181 (TLTDSSMLSPP) are enriched in low complexity. The interval 171–218 (TLTDSSMLSPPQTTLHRNVSPGAPQRPPSTGNAGGMLSTTDLIVPNGA) is disordered. At Ser233 the chain carries Phosphoserine. Positions 238–268 (GATGANSLGKVMPTKSPPPPGGGNLGMNSRK) are disordered. At Lys247 the chain carries N6-acetyllysine. Ser253 carries the post-translational modification Phosphoserine. The interval 264-281 (MNSRKPDLRVVIPPSSKG) is required for interaction with MAPKs. Thr302 and Thr309 each carry phosphothreonine; by MAPK7 and MAPK14. Ser345 carries the phosphoserine; by MAPK7 modification. Residues 380–392 (SNLSINTNQNINI) show a composition bias toward polar residues. The tract at residues 380-494 (SNLSINTNQN…KRMRMDAWVT (115 aa)) is disordered. Lys393 is subject to N6-acetyllysine; alternate. Residue Lys393 forms a Glycyl lysine isopeptide (Lys-Gly) (interchain with G-Cter in SUMO); alternate linkage. The residue at position 398 (Ser398) is a Phosphoserine; by CDK5. Thr405 is modified (phosphothreonine). The segment covering 418-432 (QPPPPPPQPQPPQPQ) has biased composition (pro residues). The residue at position 440 (Ser440) is a Phosphoserine. The span at 440–453 (SPVDSLSSSSSSYD) shows a compositional bias: low complexity. Composition is skewed to basic and acidic residues over residues 454–464 (GSDREDPRGDF) and 475–494 (NTED…AWVT).

Binds DNA as a homo- or heterodimer. Dimerizes with MEF2D. Interacts with HDAC7. Interacts with PIAS1; the interaction enhances sumoylation. Interacts with HDAC4, HDAC9 and SLC2A4RG. Interacts (via the N-terminal) with MAPK7; the interaction results in the phosphorylation and transcriptional activity of MEF2A. In terms of processing, constitutive phosphorylation on Ser-398 promotes Lys-393 sumoylation thus preventing acetylation at this site. Dephosphorylation on Ser-398 by PPP3CA upon neuron depolarization promotes a switch from sumoylation to acetylation on residue Lys-393 leading to inhibition of dendrite claw differentiation. Phosphorylation on Thr-302 and Thr-309 are the main sites involved in p38 MAPK signaling and activate transcription. Phosphorylated on these sites by MAPK14/p38alpha and MAPK11/p38beta, but not by MAPK13/p38delta nor by MAPK12/p38gamma. Phosphorylation on Ser-398 by CDK5 induced by neurotoxicity inhibits MEF2A transcriptional activation leading to apoptosis of cortical neurons. Phosphorylation on Thr-302, Thr-309 and Ser-345 can be induced by EGF. Sumoylation on Lys-393 is enhanced by PIAS1 and represses transcriptional activity. Phosphorylation on Ser-398 is required for sumoylation. Has no effect on nuclear location nor on DNA binding. Sumoylated with SUMO1 and, to a lesser extent with SUMO2 and SUMO3. PIASx facilitates sumoylation in postsynaptic dendrites in the cerebellar cortex and promotes their morphogenesis. Post-translationally, acetylation on Lys-393 activates transcriptional activity. Acetylated by p300 on several sites in diffentiating myocytes. Acetylation on Lys-4 increases DNA binding and transactivation. Hyperacetylation by p300 leads to enhanced cardiac myocyte growth and heart failure. In terms of processing, proteolytically cleaved in cerebellar granule neurons on several sites by caspase 3 and caspase 7 following neurotoxicity. Preferentially cleaves the CDK5-mediated hyperphosphorylated form which leads to neuron apoptosis and transcriptional inactivation.

The protein localises to the nucleus. Its function is as follows. Transcriptional activator which binds specifically to the MEF2 element, 5'-YTA[AT](4)TAR-3', found in numerous muscle-specific genes. Also involved in the activation of numerous growth factor- and stress-induced genes. Mediates cellular functions not only in skeletal and cardiac muscle development, but also in neuronal differentiation and survival. Plays diverse roles in the control of cell growth, survival and apoptosis via p38 MAPK signaling in muscle-specific and/or growth factor-related transcription. In cerebellar granule neurons, phosphorylated and sumoylated MEF2A represses transcription of NUR77 promoting synaptic differentiation. Associates with chromatin to the ZNF16 promoter. This Pongo abelii (Sumatran orangutan) protein is Myocyte-specific enhancer factor 2A (MEF2A).